We begin with the raw amino-acid sequence, 192 residues long: MNMNEFKGVIEGLLFASGDEGVTAKQLSKILDIGLDTVEHILEELRFEYEREDRGLMIIQSNNIFHLATKPEHSSYFKRLIDSPRTSKMSQAALETLAIIAYRQPITRAEIDEIRGVRSERPVQTLITRNLIEETGRKDTVGRPVLFQTSKEFLTFFGLATLDDLPPLPENIDPDKEEREADLFFERFQDEV.

Belongs to the ScpB family. As to quaternary structure, homodimer. Homodimerization may be required to stabilize the binding of ScpA to the Smc head domains. Component of a cohesin-like complex composed of ScpA, ScpB and the Smc homodimer, in which ScpA and ScpB bind to the head domain of Smc. The presence of the three proteins is required for the association of the complex with DNA.

The protein resides in the cytoplasm. Its function is as follows. Participates in chromosomal partition during cell division. May act via the formation of a condensin-like complex containing Smc and ScpA that pull DNA away from mid-cell into both cell halves. This chain is Segregation and condensation protein B, found in Oceanobacillus iheyensis (strain DSM 14371 / CIP 107618 / JCM 11309 / KCTC 3954 / HTE831).